A 375-amino-acid chain; its full sequence is MTSRYWVVSLPVKDSASSLWNRLQEQISKHSFDTPVYRFNIPNLRVGTLDSLLALGDDLLKSNSFVEGVSQKIRRQIEELERISGVESNALTVDGVPVDSYLTRFVWDEAKYPTMSPLKEVVDNIQSQVAKIEDDLKVRVAEYNNIRGQLNAINRKQSGSLAVRDLSNLVKPEDIVESEHLVTLLAVVPKYSQKDWLACYETLTDYVVPRSSKKLFEDNEYALYTVTLFTRVADNFRIAAREKGFQVRDFEQSVEAQETRKQELAKLVQDQESLRSSLLQWCYTSYGEVFSSWMHFCAVRTFAESIMRYGLPPAFLACVLSPAVKSEKKVRSILERLCDSTNSLYWKSEEDAGAMAGLAGDSETHPYVSFTINLA.

Belongs to the V-ATPase C subunit family. As to quaternary structure, V-ATPase is a heteromultimeric enzyme composed of a peripheral catalytic V1 complex (components A to H) attached to an integral membrane V0 proton pore complex (components: a, c, c'', d and e). In terms of processing, phosphorylated on Ser/Thr residues by WNK8.

The protein resides in the vacuole membrane. In terms of biological role, subunit of the peripheral V1 complex of vacuolar ATPase. Subunit C is necessary for the assembly of the catalytic sector of the enzyme and is likely to have a specific function in its catalytic activity. V-ATPase is responsible for acidifying a variety of intracellular compartments in eukaryotic cells. This is V-type proton ATPase subunit C (VHA-C) from Arabidopsis thaliana (Mouse-ear cress).